The primary structure comprises 98 residues: NADH-ubiquinone oxidoreductase chain 4L (98 aa).

A run of 3 helical transmembrane segments spans residues 1 to 21 (MSMVYINIFLAFILSLMGMLV), 29 to 49 (SLLCLEGMMLSLFVMMSVTIL), and 61 to 81 (IVLLVFAACEAALGLSLLVMV).

The protein belongs to the complex I subunit 4L family. As to quaternary structure, core subunit of respiratory chain NADH dehydrogenase (Complex I) which is composed of 45 different subunits.

The protein localises to the mitochondrion inner membrane. It carries out the reaction a ubiquinone + NADH + 5 H(+)(in) = a ubiquinol + NAD(+) + 4 H(+)(out). In terms of biological role, core subunit of the mitochondrial membrane respiratory chain NADH dehydrogenase (Complex I) which catalyzes electron transfer from NADH through the respiratory chain, using ubiquinone as an electron acceptor. Part of the enzyme membrane arm which is embedded in the lipid bilayer and involved in proton translocation. The protein is NADH-ubiquinone oxidoreductase chain 4L (MT-ND4L) of Vulpes vulpes (Red fox).